We begin with the raw amino-acid sequence, 357 residues long: Cyclin-Y (357 aa).

The segment covering 1-13 has biased composition (polar residues); it reads MGNSSCCLRTRSS. The segment at 1–23 is disordered; that stretch reads MGNSSCCLRTRSSSGEDKSYNND. One can recognise a Cyclin N-terminal domain in the interval 186 to 284; that stretch reads PDHRNIYRFV…RFLECLDFNI (99 aa).

This sequence belongs to the cyclin family. In terms of assembly, interacts with pct-1; the interaction is required to activate pct-1.

Its subcellular location is the cytoplasm. The protein resides in the cell projection. It is found in the dendrite. The protein localises to the axon. Its function is as follows. In association with pct-1, regulates the trafficking of synaptic vesicle precursors in DA motor neurons by promoting anterograde trafficking to the axon and preventing dynein-dependent trafficking to the dendrite. May also regulate synaptic vesicle trafficking in DD motor neurons and in RIA interneurons. Involved in synapse formation during DD motor neuron remodeling by disassembling ventral presynaptic structures. May activate cdk-5. The chain is Cyclin-Y from Caenorhabditis elegans.